The chain runs to 148 residues: uncharacterized protein (148 aa).

Residues 1 to 19 (MLSNAKLLLSLAMASTALG) form the signal peptide. 2 N-linked (GlcNAc...) asparagine glycosylation sites follow: Asn-41 and Asn-59. Asn-127 carries GPI-anchor amidated asparagine lipidation. A propeptide spans 128–148 (AANARAIPGALGLAGAVMMLL) (removed in mature form).

This sequence belongs to the SED1 family. Post-translationally, the GPI-anchor is attached to the protein in the endoplasmic reticulum and serves to target the protein to the cell surface. There, the glucosamine-inositol phospholipid moiety is cleaved off and the GPI-modified mannoprotein is covalently attached via its lipidless GPI glycan remnant to the 1,6-beta-glucan of the outer cell wall layer.

The protein localises to the secreted. The protein resides in the cell wall. It localises to the membrane. Functionally, cell wall protein that plays a role in adaptation and resistance to cell wall stress. This is an uncharacterized protein from Saccharomyces cerevisiae (strain ATCC 204508 / S288c) (Baker's yeast).